The chain runs to 1131 residues: Phytochrome A (1131 aa).

Positions 1 to 23 (MSSSRPAHSSSSSSRTRQSSRAR) are disordered. A GAF domain is found at 219-404 (SMEALCNTVV…VFAVHVNKEF (186 aa)). Position 324 (cysteine 324) interacts with phytochromobilin. PAS domains are found at residues 620 to 690 (VTSE…LQGR) and 750 to 834 (VEGD…LAGE). Residues 904–1124 (YMRHAINKPL…TFILTAELAA (221 aa)) form the Histidine kinase domain.

Belongs to the phytochrome family. As to quaternary structure, homodimer. Contains one covalently linked phytochromobilin chromophore.

In terms of biological role, regulatory photoreceptor which exists in two forms that are reversibly interconvertible by light: the Pr form that absorbs maximally in the red region of the spectrum and the Pfr form that absorbs maximally in the far-red region. Photoconversion of Pr to Pfr induces an array of morphogenic responses, whereas reconversion of Pfr to Pr cancels the induction of those responses. Pfr controls the expression of a number of nuclear genes including those encoding the small subunit of ribulose-bisphosphate carboxylase, chlorophyll A/B binding protein, protochlorophyllide reductase, rRNA, etc. It also controls the expression of its own gene(s) in a negative feedback fashion. This Zea mays (Maize) protein is Phytochrome A (PHYA1).